Reading from the N-terminus, the 1674-residue chain is Maestro heat-like repeat-containing protein family member 2A (1674 aa).

The tract at residues 1 to 26 (MTEAITEAAVASSEEVSEERDDLGPL) is disordered. HEAT repeat units follow at residues 73-96 (ATTEPSVVINTLIRCLQVPEISTQ), 97-133 (RKVNIYNILQDIIQQEGELEEQCVQRLVAIASKEMRE), 195-234 (MPYMGITLATIFTMLRLANEAKIRQAICSAMETFCETVQF), 254-292 (LKVFPMYRYFVTVWLRHYNPEVKLGVIKSLKPMLGLLLP), 382-419 (SYPKELMKFFFSQMETNKEAVRVGTLNLIRAIVSADEP), 424-461 (RAIYLAIRVVKNTISDTRSKVRMAILHIIGQLALCGYQ), 573-612 (PAPQKLLARLLVLMSSPYKGEGRGIAMLNLLRTLSQSIAP), 615-641 (ADMWELEIALLVRYLEEHTEFTWDQKA), 642-679 (WEDKLIQFLRNSLKKTRGSSWSLRLSKELNNQIASFDS), 739-776 (KTVLNVLHDFEERIQESEQSWQISAWRKDHPWRRETVK), 993-1030 (GQFGTMVGLIAPCTCDAHQRTRMASMNVLSSLLDLHAS), 1221-1263 (DPLM…SHRP), 1381-1420 (EKLLKPAALLLEKGADQEEDEALRVLSLRALGNMALGAPK), and 1627-1674 (LDFP…QGMS).

The protein is Maestro heat-like repeat-containing protein family member 2A (MROH2A) of Homo sapiens (Human).